Reading from the N-terminus, the 1137-residue chain is MLAHTHRINKCLYGQNQMRNRHALLGALPPIFLLLLPLISCMKFDPERIAARLRIDEKWDQLDAFQSIKSRRGRQIQPKEISIQVTAPLFSSRLFDYGTTAGDEELPQALDVGKKLDLVHPISFFGSDYKTIYILSNGAVGFEASSRSYKSGILPSSTRFLAPFWNRNDLRNGGKVYYREVTKGRVLERGQSEIRYQYDKNVKVKSALIITWDKMQPLNTAALPEENTNTFQAAIFITANGTFANFIYSNIGWTQGAEAGFNAGDATNHFKLPTSGTPNIMYLEEYGNTGIPGEWMFELSELRVISCKSGIKGDTCDQECSNGEWGPDCAYCCHCSEGTCHPISGDCQRGCATCWDGVACQTRQEKCATKTQCASNALSFNDYDRCGEPIQRCQCLNGYKGDGYNNCEDVDECKTNSTICHKNAICTNTPGRYFCMCKEGFSGDGQNDCSQSFLFQYDTHHQLPRKKNSKMEWNLKKPLKIFGETTEKLTVTSTGLIAINEVNRDNGRLEDMQLVGIAPFFGPIDLSRNGAVSVEEVDDVEVLRRVTRTIGENYNDPTFVAKSALVVTFSNVTDGRQTKGNTFQALLIDGSNSKNEKMTFVELMYRDLPWASGAEAGILSSDASSSILLPASGTEAISQLSKNSNIKQPGTWLYRIDKAQLMPCAQPIQVPPYCDRLLSTAPRLPSKLLEEKKEGLTLPSPGAFLVDQPSETIVPTLVRGGGTVTRGRNVLTVTTSPIGNQQRQQTTKAVTRPRPNFSSTPHRPIVSLSDEDFELGPDAFEVTFPPFVTVQPELFRPNQRNGVQKSTQRPLPDFSIRTPLKEEATTSVPREKTSSAAPAHSPIEEMSENEESPFEAGSFDGEAVKFNEELEAIDKALQTTKKQRPELSVTPQPEDLSGDARVIETTEEDEEEAEISTETTTEMSSTTTTTKAHTTTTTMMIPTEAPPSIFVFTTTQKPRAQSTTQKRIIVQQPSIVVNSQPPKQRNDNQPTVNVGHAEEQSPRLAILLPVMIILAWLVILVCIGAVVCCKRRNSRESSQLRAMYGAAYGVRPTAYESKRKESTYEDHLERAARLSGQPALSGQQAGKVSLYGSYWNLEPLSNHSPARLSTQERQSPPSFVNNGYTNQTTRYTYAGHY.

Residues 1-41 (MLAHTHRINKCLYGQNQMRNRHALLGALPPIFLLLLPLISC) form the signal peptide. The Extracellular segment spans residues 43–1005 (KFDPERIAAR…HAEEQSPRLA (963 aa)). The NIDO 1 domain occupies 163-302 (PFWNRNDLRN…GEWMFELSEL (140 aa)). N-linked (GlcNAc...) asparagine glycosylation is found at N240 and N416. Residues 409-450 (DVDECKTNSTICHKNAICTNTPGRYFCMCKEGFSGDGQNDCS) enclose the EGF-like; calcium-binding domain. 3 disulfides stabilise this stretch: C413–C426, C420–C435, and C437–C449. The 141-residue stretch at 519–659 (PFFGPIDLSR…GTWLYRIDKA (141 aa)) folds into the NIDO 2 domain. N-linked (GlcNAc...) asparagine glycosylation is present at N571. Residues 738 to 749 (IGNQQRQQTTKA) are compositionally biased toward polar residues. 5 disordered regions span residues 738–765 (IGNQQRQQTTKAVTRPRPNFSSTPHRPI), 795–856 (FRPN…PFEA), 878–897 (QTTKKQRPELSVTPQPEDLS), 906–933 (TEEDEEEAEISTETTTEMSSTTTTTKAH), and 978–998 (NSQPPKQRNDNQPTVNVGHAE). N-linked (GlcNAc...) asparagine glycosylation is present at N756. The segment covering 798 to 809 (NQRNGVQKSTQR) has biased composition (polar residues). Basic and acidic residues predominate over residues 819–833 (PLKEEATTSVPREKT). The span at 906 to 915 (TEEDEEEAEI) shows a compositional bias: acidic residues. Low complexity predominate over residues 916–933 (STETTTEMSSTTTTTKAH). The span at 978-992 (NSQPPKQRNDNQPTV) shows a compositional bias: polar residues. Residues 1006-1026 (ILLPVMIILAWLVILVCIGAV) form a helical membrane-spanning segment. Residues 1027–1037 (VCCKRRNSRES) lie on the Cytoplasmic side of the membrane. A disordered region spans residues 1106 to 1125 (ARLSTQERQSPPSFVNNGYT).

Post-translationally, may be proteolytically cleaved and secreted.

It localises to the membrane. The protein resides in the cell projection. The protein localises to the dendrite. Its subcellular location is the secreted. In terms of biological role, along with dyf-7, enables neurite growth and maintenance by anchoring amphid dendritic tips during neuron cell body migration in embryonic and larval development. Promotes seam cell remodeling during the dauer phase. Plays a role in positively regulating locomotion during the dauer phase. This chain is Dendrite extension defective protein 1, found in Caenorhabditis elegans.